Reading from the N-terminus, the 52-residue chain is Lantibiotic gallidermin (52 aa).

Positions 1-30 (MEAVKEKNELFDLDVKVNAKESNDSGAEPR) are excised as a propeptide. A cross-link (lanthionine (Ser-Cys)) is located at residues 33–37 (SKFLC). Positions 38–41 (TPGC) form a cross-link, beta-methyllanthionine (Thr-Cys). Threonine 44 is subject to (Z)-2,3-didehydrobutyrine. The lanthionine (Ser-Cys) cross-link spans 46–51 (SFNSYC). The segment at residues 49 to 52 (SYCC) is a cross-link (S-(2-aminovinyl)-D-cysteine (Ser-Cys)).

This sequence belongs to the type A lantibiotic family. Maturation of lantibiotics involves the enzymatic conversion of Thr, and Ser into dehydrated AA and the formation of thioether bonds with cysteine. The C-terminal lanthionine undergoes decarboxylation. This is followed by membrane translocation and cleavage of the modified precursor. In terms of processing, the structure of the 2,3-didehydrobutyrine is not discussed in PubMed:1932575. However, in Fig. 5 the NMR model appears to have the Z-isomer.

In terms of biological role, lanthionine-containing peptide antibiotic (lantibiotic) active on Gram-positive bacteria. The bactericidal activity of lantibiotics is based on depolarization of energized bacterial cytoplasmic membranes, initiated by the formation of aqueous transmembrane pores. In Staphylococcus gallinarum, this protein is Lantibiotic gallidermin (gdmA).